The primary structure comprises 614 residues: DBH-like monooxygenase protein 1 homolog (614 aa).

An N-terminal signal peptide occupies residues 1–22 (MSENKLFCAIVFLTSLFCSTCS). Residues 23–593 (QGTRFVHSAA…CRKDSAIQCE (571 aa)) lie on the Lumenal side of the membrane. One can recognise a DOMON domain in the interval 37–150 (RRYNIKWGFD…STVRVIWAFH (114 aa)). N116 carries an N-linked (GlcNAc...) asparagine glycan. The active site involves Y205. 2 cysteine pairs are disulfide-bonded: C207–C259 and C244–C271. Residues H237 and H238 each coordinate Cu cation. An N-linked (GlcNAc...) asparagine glycan is attached at N249. Positions 309, 391, and 393 each coordinate Cu cation. Cystine bridges form between C366-C482, C370-C552, and C445-C467. Residue H391 is part of the active site. N454 is a glycosylation site (N-linked (GlcNAc...) asparagine). Position 466 (M466) interacts with Cu cation. N-linked (GlcNAc...) asparagine glycosylation is present at N519. A helical membrane pass occupies residues 594 to 612 (HSLALLLTACLLLILQTCL).

This sequence belongs to the copper type II ascorbate-dependent monooxygenase family. It depends on Cu(2+) as a cofactor.

It localises to the endoplasmic reticulum membrane. This Danio rerio (Zebrafish) protein is DBH-like monooxygenase protein 1 homolog (moxd1).